Consider the following 283-residue polypeptide: Zip homologous protein 4 (283 aa).

The RING-type zinc-finger motif lies at 6–50 (CFRCYKFPSKQIEFYLTNCMHMFCIECERLCHPPEEEPLKCIQCS). Disordered stretches follow at residues 149–175 (KKQL…SSRS) and 201–283 (TKAQ…RNSQ). The segment covering 163-175 (PRSNSLKVASSRS) has biased composition (polar residues). The span at 202-216 (KAQAKAEAEAEAPAK) shows a compositional bias: low complexity. Residues 220–235 (SKAQTTKCTSNYQSHP) are compositionally biased toward polar residues. A compositionally biased stretch (basic and acidic residues) spans 267 to 283 (KKHEAQREKHKEHRNSQ).

In terms of assembly, interacts with zhp-3; the interaction is required for their localization along paired chromosomes and stability, and for the formation of chiasma during meiotic recombination. Expressed in the germline.

The protein resides in the chromosome. Its function is as follows. Recruited co-dependently with zhp-3 to the synaptonemal complex between homologous chromosome pairs to regulate the formation and number of crossover events between homologs during meiotic recombination. In the early stages of pachytene, in complex with zhp-4, recruited by the zhp-1-zhp-2 heterodimer to designated crossover sites along the recombination intermediate to stabilize other pro-crossover factors such as rmh-1, msh-5 and cosa-1. This in turn facilitates crossover and promotes the formation of chiasma in each meiotic nucleus at the late pachytene stage of meiosis. Negatively regulates double strand break formation to promote formation of the crossover intermediate. The sequence is that of Zip homologous protein 4 from Caenorhabditis elegans.